The sequence spans 1025 residues: Putative receptor-like protein kinase At3g47110 (1025 aa).

The signal sequence occupies residues 1–30; it reads MGVPCIVMRLILVSALLVSVSLEHSDMVCA. Residues 31 to 653 are Extracellular-facing; that stretch reads QTIRLTEETD…LPRRHSSVRK (623 aa). N-linked (GlcNAc...) asparagine glycans are attached at residues Asn63 and Asn103. LRR repeat units follow at residues 104–128, 130–151, 152–175, 176–200, 202–224, 226–248, 249–271, 273–297, 298–323, and 325–344; these read LSFL…VGNL, RLQY…VLSN, CSSL…EFGS, LSKL…LGNL, SLQM…IARL, QMIF…IYNL, SSLI…DFGS, LPNL…LSNI, SSLR…RLQN, and LLLG…DLDF. N-linked (GlcNAc...) asparagine glycosylation is found at Asn135 and Asn151. N-linked (GlcNAc...) asparagine glycans are attached at residues Asn188 and Asn199. N-linked (GlcNAc...) asparagine glycosylation occurs at Asn247. An N-linked (GlcNAc...) asparagine glycan is attached at Asn296. N-linked (GlcNAc...) asparagine glycosylation is found at Asn331, Asn336, Asn350, and Asn374. LRR repeat units lie at residues 351–374, 376–400, 401–424, 426–448, 449–472, 473–496, 498–520, 521–544, 546–567, 568–593, and 595–616; these read CSQL…FIAN, STQL…IGNL, VSLQ…LGEL, ELRK…LGNI, SGLT…LGSC, SYLL…LMEL, SLVV…IGKL, KFLL…LANC, SLEF…IRGL, TGLR…NFSK, and QNLN…VFRN. N-linked (GlcNAc...) asparagine glycans are attached at residues Asn447, Asn458, Asn486, and Asn503. Asn579, Asn590, Asn598, and Asn616 each carry an N-linked (GlcNAc...) asparagine glycan. A helical transmembrane segment spans residues 654–674; it reads IITICVSAVMAALLLLCLCVV. The Cytoplasmic segment spans residues 675-1025; it reads YLCWYKLRVK…RESFFRDEET (351 aa). Residue Thr716 is modified to Phosphothreonine. The Protein kinase domain maps to 719–1020; sequence FSSSNLIGSG…KLVSIRESFF (302 aa). Residues 725 to 733 and Lys748 contribute to the ATP site; that span reads IGSGNFGAV. Phosphotyrosine occurs at positions 798 and 843. Asp856 serves as the catalytic Proton acceptor. Tyr904 carries the phosphotyrosine modification.

Belongs to the protein kinase superfamily. Ser/Thr protein kinase family.

It is found in the cell membrane. It carries out the reaction L-seryl-[protein] + ATP = O-phospho-L-seryl-[protein] + ADP + H(+). The enzyme catalyses L-threonyl-[protein] + ATP = O-phospho-L-threonyl-[protein] + ADP + H(+). The sequence is that of Putative receptor-like protein kinase At3g47110 from Arabidopsis thaliana (Mouse-ear cress).